We begin with the raw amino-acid sequence, 320 residues long: Methionine import ATP-binding protein MetN (320 aa).

The ABC transporter domain occupies 2–237 (IEIKNVSKYF…PSSEMKKLIG (236 aa)). ATP is bound at residue 34 to 41 (GHSGAGKS).

It belongs to the ABC transporter superfamily. Methionine importer (TC 3.A.1.24) family. The complex is composed of two ATP-binding proteins (MetN), two transmembrane proteins (MetI) and a solute-binding protein (MetQ).

It localises to the cell membrane. The enzyme catalyses L-methionine(out) + ATP + H2O = L-methionine(in) + ADP + phosphate + H(+). It catalyses the reaction D-methionine(out) + ATP + H2O = D-methionine(in) + ADP + phosphate + H(+). Functionally, part of the ABC transporter complex MetNIQ involved in methionine import. Responsible for energy coupling to the transport system. This is Methionine import ATP-binding protein MetN from Clostridium acetobutylicum (strain ATCC 824 / DSM 792 / JCM 1419 / IAM 19013 / LMG 5710 / NBRC 13948 / NRRL B-527 / VKM B-1787 / 2291 / W).